An 83-amino-acid polypeptide reads, in one-letter code: Mitochondrial import inner membrane translocase subunit Tim8 B (83 aa).

Position 2 is an N-acetylalanine (alanine 2). The Twin CX3C motif signature appears at 36–59; sequence CWDKCVEKPGNRLDSRTENCLSSC. 2 cysteine pairs are disulfide-bonded: cysteine 36–cysteine 59 and cysteine 40–cysteine 55.

This sequence belongs to the small Tim family. Heterohexamer; possibly composed of 3 copies of TIMM8B and 3 copies of TIMM13, named soluble 70 kDa complex. Associates with the TIM22 complex, whose core is composed of TIMM22. In terms of tissue distribution, ubiquitous, with highest expression in heart, kidney, liver and skeletal muscle.

Its subcellular location is the mitochondrion inner membrane. In terms of biological role, probable mitochondrial intermembrane chaperone that participates in the import and insertion of some multi-pass transmembrane proteins into the mitochondrial inner membrane. Also required for the transfer of beta-barrel precursors from the TOM complex to the sorting and assembly machinery (SAM complex) of the outer membrane. Acts as a chaperone-like protein that protects the hydrophobic precursors from aggregation and guide them through the mitochondrial intermembrane space. This Homo sapiens (Human) protein is Mitochondrial import inner membrane translocase subunit Tim8 B (TIMM8B).